Reading from the N-terminus, the 89-residue chain is Small ribosomal subunit protein uS15 (89 aa).

The protein belongs to the universal ribosomal protein uS15 family. As to quaternary structure, part of the 30S ribosomal subunit. Forms a bridge to the 50S subunit in the 70S ribosome, contacting the 23S rRNA.

Functionally, one of the primary rRNA binding proteins, it binds directly to 16S rRNA where it helps nucleate assembly of the platform of the 30S subunit by binding and bridging several RNA helices of the 16S rRNA. Its function is as follows. Forms an intersubunit bridge (bridge B4) with the 23S rRNA of the 50S subunit in the ribosome. This Orientia tsutsugamushi (strain Boryong) (Rickettsia tsutsugamushi) protein is Small ribosomal subunit protein uS15.